The primary structure comprises 378 residues: MQDGRTTLSKFLIDTLDRQPCSTETARNAGLSALLIDVAAAIKSISAMLTKGALGGNYGSAQSINTHGEEQKKLDVATNEIFVQQCEWDGLLAAMVSEEMESVYAIPPGYPRGDYLLAFDPLDGSSNIDINGVVGSIFSVLRNGEGNGNANEKNGSDPRGTVGESAFLRPGCEQVAAGYAVYGPSTMLVLSVGNGTHGFTLEREIGNFVLTHSNIRIPEDTVEFAINASNERFWEPPVRRYVQECKDGRSGCRASDFNMRWIASMVAEVHRILMRGGVFMYPRDSKTPAMEGRLRLLYEANPMSFLVEQAGGLSITGRERILDVVPRALHGRVPVILGSKHEVERIGRYHGEYDRGEDQPFTSPLFSRRSLFLPGFTA.

Residues Glu98, Asp120, Leu122, and Asp123 each coordinate Mg(2+). Residues 123–126 (DGSS) and Asn227 each bind substrate. A Mg(2+)-binding site is contributed by Glu299.

The protein belongs to the FBPase class 1 family. As to quaternary structure, homotetramer. Mg(2+) serves as cofactor.

It is found in the cytoplasm. The enzyme catalyses beta-D-fructose 1,6-bisphosphate + H2O = beta-D-fructose 6-phosphate + phosphate. It functions in the pathway carbohydrate biosynthesis; gluconeogenesis. The sequence is that of Fructose-1,6-bisphosphatase class 1 2 from Paraburkholderia xenovorans (strain LB400).